The primary structure comprises 376 residues: uncharacterized protein (376 aa).

The Lumenal segment spans residues 1–280; that stretch reads MPIPIIAHIA…RTPGFRRVVS (280 aa). NADP(+)-binding residues include Ile66, Asp115, Arg178, Lys233, Val270, and Thr272. The active-site Lowers pKa of active site Tyr is Lys233. The helical transmembrane segment at 281–301 threads the bilayer; the sequence is FGKVWGLFLYLLLWPFWWLLL. The Cytoplasmic portion of the chain corresponds to 302-376; that stretch reads KGTIHGAQSF…KKKKIKKSKK (75 aa).

The protein belongs to the short-chain dehydrogenases/reductases (SDR) family.

It is found in the cytoplasm. The protein resides in the endoplasmic reticulum membrane. Its function is as follows. May be involved in lipid metabolism. This is an uncharacterized protein from Schizosaccharomyces pombe (strain 972 / ATCC 24843) (Fission yeast).